Reading from the N-terminus, the 441-residue chain is 4-alpha-glucanotransferase (441 aa).

Residues Asp-13, Asn-15, Asp-17, Val-19, and Asp-21 each coordinate Ca(2+). Residue Asp-186 is the Nucleophile of the active site. Glu-216 functions as the Proton donor in the catalytic mechanism.

The protein belongs to the glycosyl hydrolase 13 family. In terms of assembly, monomer. Ca(2+) serves as cofactor.

It is found in the cytoplasm. It carries out the reaction Transfers a segment of a (1-&gt;4)-alpha-D-glucan to a new position in an acceptor, which may be glucose or a (1-&gt;4)-alpha-D-glucan.. The polypeptide is 4-alpha-glucanotransferase (mgtA) (Thermotoga maritima (strain ATCC 43589 / DSM 3109 / JCM 10099 / NBRC 100826 / MSB8)).